The primary structure comprises 425 residues: COBRA-like protein 4 (425 aa).

Positions Met1–Ala27 are cleaved as a signal peptide. 5 N-linked (GlcNAc...) asparagine glycosylation sites follow: Asn36, Asn163, Asn171, Asn319, and Asn352.

Belongs to the COBRA family.

This Oryza sativa subsp. japonica (Rice) protein is COBRA-like protein 4 (BC1L9).